A 298-amino-acid chain; its full sequence is Porphobilinogen deaminase (298 aa).

Cys-239 is subject to S-(dipyrrolylmethanemethyl)cysteine.

It belongs to the HMBS family. Monomer. It depends on dipyrromethane as a cofactor.

It carries out the reaction 4 porphobilinogen + H2O = hydroxymethylbilane + 4 NH4(+). The protein operates within porphyrin-containing compound metabolism; protoporphyrin-IX biosynthesis; coproporphyrinogen-III from 5-aminolevulinate: step 2/4. Its function is as follows. Tetrapolymerization of the monopyrrole PBG into the hydroxymethylbilane pre-uroporphyrinogen in several discrete steps. This is Porphobilinogen deaminase from Orientia tsutsugamushi (strain Boryong) (Rickettsia tsutsugamushi).